The primary structure comprises 845 residues: Protein translocase subunit SecA 1 (845 aa).

ATP-binding positions include Gln-91, Gly-109–Thr-113, and Asp-498. Residues Thr-795–Glu-845 form a disordered region. Cys-829, Cys-831, Cys-840, and His-841 together coordinate Zn(2+). The span at Lys-835 to Glu-845 shows a compositional bias: basic residues.

This sequence belongs to the SecA family. Monomer and homodimer. Part of the essential Sec protein translocation apparatus which comprises SecA, SecYEG and auxiliary proteins SecDF. Other proteins may also be involved. The cofactor is Zn(2+).

It is found in the cell membrane. It localises to the cytoplasm. The catalysed reaction is ATP + H2O + cellular proteinSide 1 = ADP + phosphate + cellular proteinSide 2.. Functionally, part of the Sec protein translocase complex. Interacts with the SecYEG preprotein conducting channel. Has a central role in coupling the hydrolysis of ATP to the transfer of proteins into and across the cell membrane, serving as an ATP-driven molecular motor driving the stepwise translocation of polypeptide chains across the membrane. In Staphylococcus haemolyticus (strain JCSC1435), this protein is Protein translocase subunit SecA 1.